We begin with the raw amino-acid sequence, 483 residues long: Putative (R)-citramalate synthase CimA (483 aa).

The 245-residue stretch at 1 to 245 (MRDGEQTPGV…DTGIKHEQIY (245 aa)) folds into the Pyruvate carboxyltransferase domain.

Belongs to the alpha-IPM synthase/homocitrate synthase family. Homodimer.

It carries out the reaction pyruvate + acetyl-CoA + H2O = (3R)-citramalate + CoA + H(+). Its pathway is amino-acid biosynthesis; L-isoleucine biosynthesis; 2-oxobutanoate from pyruvate: step 1/3. Catalyzes the condensation of pyruvate and acetyl-coenzyme A to form (R)-citramalate. This Methanosarcina acetivorans (strain ATCC 35395 / DSM 2834 / JCM 12185 / C2A) protein is Putative (R)-citramalate synthase CimA.